The chain runs to 403 residues: uncharacterized protein (403 aa).

6 consecutive transmembrane segments (helical) span residues 31–51 (FLIA…IGSF), 186–206 (LPIG…GIIV), 238–258 (ISAV…PIII), 268–288 (LAIF…SLLC), 303–323 (LISP…TIMV), and 355–375 (LIEI…SFIL).

This sequence to B.subtilis YhaP.

It is found in the cell membrane. This is an uncharacterized protein from Methanocaldococcus jannaschii (strain ATCC 43067 / DSM 2661 / JAL-1 / JCM 10045 / NBRC 100440) (Methanococcus jannaschii).